The sequence spans 277 residues: Tryptophan synthase alpha chain (277 aa).

Active-site proton acceptor residues include Glu43 and Glu54.

Belongs to the TrpA family. As to quaternary structure, tetramer of two alpha and two beta chains.

It carries out the reaction (1S,2R)-1-C-(indol-3-yl)glycerol 3-phosphate + L-serine = D-glyceraldehyde 3-phosphate + L-tryptophan + H2O. It functions in the pathway amino-acid biosynthesis; L-tryptophan biosynthesis; L-tryptophan from chorismate: step 5/5. Functionally, the alpha subunit is responsible for the aldol cleavage of indoleglycerol phosphate to indole and glyceraldehyde 3-phosphate. This Haloferax volcanii (strain ATCC 29605 / DSM 3757 / JCM 8879 / NBRC 14742 / NCIMB 2012 / VKM B-1768 / DS2) (Halobacterium volcanii) protein is Tryptophan synthase alpha chain.